We begin with the raw amino-acid sequence, 249 residues long: DNA polymerase sliding clamp 1 (249 aa).

The protein belongs to the PCNA family. In terms of assembly, homotrimer. The subunits circularize to form a toroid; DNA passes through its center. Replication factor C (RFC) is required to load the toroid on the DNA. Interacts with TIP.

Inhibited by interaction with the PCNA inhibitor TIP. Sliding clamp subunit that acts as a moving platform for DNA processing. Responsible for tethering the catalytic subunit of DNA polymerase and other proteins to DNA during high-speed replication. This chain is DNA polymerase sliding clamp 1, found in Thermococcus kodakarensis (strain ATCC BAA-918 / JCM 12380 / KOD1) (Pyrococcus kodakaraensis (strain KOD1)).